We begin with the raw amino-acid sequence, 273 residues long: Rhamnulose-1-phosphate aldolase (273 aa).

Residue glutamate 117 is part of the active site. Residues histidine 140, histidine 142, and histidine 211 each contribute to the Zn(2+) site.

The protein belongs to the aldolase class II family. RhaD subfamily. Zn(2+) is required as a cofactor.

It is found in the cytoplasm. It carries out the reaction L-rhamnulose 1-phosphate = (S)-lactaldehyde + dihydroxyacetone phosphate. Its pathway is carbohydrate degradation; L-rhamnose degradation; glycerone phosphate from L-rhamnose: step 3/3. In terms of biological role, catalyzes the reversible cleavage of L-rhamnulose-1-phosphate to dihydroxyacetone phosphate (DHAP) and L-lactaldehyde. The polypeptide is Rhamnulose-1-phosphate aldolase (Listeria monocytogenes serotype 4b (strain F2365)).